We begin with the raw amino-acid sequence, 151 residues long: Large ribosomal subunit protein uL13 (151 aa).

Belongs to the universal ribosomal protein uL13 family. Part of the 50S ribosomal subunit.

Its function is as follows. This protein is one of the early assembly proteins of the 50S ribosomal subunit, although it is not seen to bind rRNA by itself. It is important during the early stages of 50S assembly. This is Large ribosomal subunit protein uL13 from Petrotoga mobilis (strain DSM 10674 / SJ95).